The following is a 117-amino-acid chain: uncharacterized protein (117 aa).

Its subcellular location is the cytoplasm. The protein resides in the nucleus. This is an uncharacterized protein from Schizosaccharomyces pombe (strain 972 / ATCC 24843) (Fission yeast).